The primary structure comprises 162 residues: tRNA (cytidine(34)-2'-O)-methyltransferase (162 aa).

S-adenosyl-L-methionine is bound by residues Leu83, Gly105, Ile127, and Ser135.

It belongs to the class IV-like SAM-binding methyltransferase superfamily. RNA methyltransferase TrmH family. TrmL subfamily. Homodimer.

It is found in the cytoplasm. The enzyme catalyses cytidine(34) in tRNA + S-adenosyl-L-methionine = 2'-O-methylcytidine(34) in tRNA + S-adenosyl-L-homocysteine + H(+). It carries out the reaction 5-carboxymethylaminomethyluridine(34) in tRNA(Leu) + S-adenosyl-L-methionine = 5-carboxymethylaminomethyl-2'-O-methyluridine(34) in tRNA(Leu) + S-adenosyl-L-homocysteine + H(+). Functionally, methylates the ribose at the nucleotide 34 wobble position in the two leucyl isoacceptors tRNA(Leu)(CmAA) and tRNA(Leu)(cmnm5UmAA). Catalyzes the methyl transfer from S-adenosyl-L-methionine to the 2'-OH of the wobble nucleotide. The sequence is that of tRNA (cytidine(34)-2'-O)-methyltransferase from Yersinia pestis.